The primary structure comprises 202 residues: dTTP/UTP pyrophosphatase (202 aa).

The Proton acceptor role is filled by D76.

This sequence belongs to the Maf family. YhdE subfamily. A divalent metal cation is required as a cofactor.

It is found in the cytoplasm. It carries out the reaction dTTP + H2O = dTMP + diphosphate + H(+). It catalyses the reaction UTP + H2O = UMP + diphosphate + H(+). Its function is as follows. Nucleoside triphosphate pyrophosphatase that hydrolyzes dTTP and UTP. May have a dual role in cell division arrest and in preventing the incorporation of modified nucleotides into cellular nucleic acids. The chain is dTTP/UTP pyrophosphatase from Neisseria meningitidis serogroup B (strain ATCC BAA-335 / MC58).